The following is a 717-amino-acid chain: F-box only protein 42 (717 aa).

Residues 1–30 show a composition bias toward acidic residues; the sequence is MASSSDSEDDSVMAVDQEETALEGTMEQDE. A disordered region spans residues 1–34; that stretch reads MASSSDSEDDSVMAVDQEETALEGTMEQDEDPHP. The F-box domain maps to 44 to 93; the sequence is NRSMSELPEEVLEYILSFLSPYQEHKTAALVCKQWYRLIKGVAHQCYHGF. Kelch repeat units follow at residues 132-184, 186-242, 244-293, and 295-342; these read SMYV…VYKD, LVLF…VIGD, MIVF…VIDD, and TLLI…LWCH. The tract at residues 361–452 is disordered; the sequence is RAPLSPSLNS…NLSPGTVAVG (92 aa). A compositionally biased stretch (low complexity) spans 363 to 376; the sequence is PLSPSLNSRPSPIS. Phosphoserine is present on residues S365 and S373. T378 carries the post-translational modification Phosphothreonine. Polar residues predominate over residues 416 to 426; that stretch reads QRQTPSGSREG. S552 is modified (phosphoserine). Positions 570-595 are enriched in low complexity; that stretch reads GPSASAALSPPLGSSPSSPGSQSLSS. The tract at residues 570 to 632 is disordered; sequence GPSASAALSP…HHPPQSLNVG (63 aa).

Component of some SCF complex, composed of CUL1, SKP1, RBX1 and FBXO42. Interacts (via the kelch domain) with p53/TP53; interaction is direct.

Substrate-recognition component of some SCF (SKP1-CUL1-F-box protein)-type E3 ubiquitin ligase complex. Specifically recognizes p53/TP53, promoting its ubiquitination and degradation. This chain is F-box only protein 42 (Fbxo42), found in Mus musculus (Mouse).